The primary structure comprises 72 residues: Translation initiation factor IF-1 (72 aa).

Positions 1–72 (MAKEDNIEMQ…SKGRIVFRSR (72 aa)) constitute an S1-like domain.

This sequence belongs to the IF-1 family. As to quaternary structure, component of the 30S ribosomal translation pre-initiation complex which assembles on the 30S ribosome in the order IF-2 and IF-3, IF-1 and N-formylmethionyl-tRNA(fMet); mRNA recruitment can occur at any time during PIC assembly.

The protein resides in the cytoplasm. Its function is as follows. One of the essential components for the initiation of protein synthesis. Stabilizes the binding of IF-2 and IF-3 on the 30S subunit to which N-formylmethionyl-tRNA(fMet) subsequently binds. Helps modulate mRNA selection, yielding the 30S pre-initiation complex (PIC). Upon addition of the 50S ribosomal subunit IF-1, IF-2 and IF-3 are released leaving the mature 70S translation initiation complex. The polypeptide is Translation initiation factor IF-1 (Salmonella paratyphi A (strain ATCC 9150 / SARB42)).